A 477-amino-acid polypeptide reads, in one-letter code: Glycogen synthase (477 aa).

Residue K15 participates in ADP-alpha-D-glucose binding.

It belongs to the glycosyltransferase 1 family. Bacterial/plant glycogen synthase subfamily.

It catalyses the reaction [(1-&gt;4)-alpha-D-glucosyl](n) + ADP-alpha-D-glucose = [(1-&gt;4)-alpha-D-glucosyl](n+1) + ADP + H(+). The protein operates within glycan biosynthesis; glycogen biosynthesis. Synthesizes alpha-1,4-glucan chains using ADP-glucose. The sequence is that of Glycogen synthase from Serratia proteamaculans (strain 568).